The following is a 145-amino-acid chain: Small ribosomal subunit protein uS17c (145 aa).

Residues 1 to 36 (MLLTTPFVSSPVRVQGNGGSGASPWAGAATALRIQA) constitute a chloroplast transit peptide. A disordered region spans residues 101–145 (KTKHFLAVPLPPRDTRRKSQLLPPLQSQSQSQDQDQPPTPPPSSD). Positions 120–136 (QLLPPLQSQSQSQDQDQ) are enriched in low complexity.

This sequence belongs to the universal ribosomal protein uS17 family. Part of the 30S ribosomal subunit.

It is found in the plastid. It localises to the chloroplast. In terms of biological role, one of the primary rRNA binding proteins, it binds specifically to the 5'-end of 16S ribosomal RNA. The protein is Small ribosomal subunit protein uS17c (RPS17) of Oryza sativa subsp. japonica (Rice).